The sequence spans 859 residues: Heterogeneous nuclear ribonucleoprotein U-like protein 1 (859 aa).

Positions methionine 1–asparagine 103 are necessary for interaction with HRMT1L1. The SAP domain maps to valine 3–leucine 37. Positions alanine 36–methionine 131 are disordered. The segment covering glutamate 38 to proline 54 has biased composition (acidic residues). A compositionally biased stretch (pro residues) spans glutamine 77 to glutamate 88. Residue lysine 117 forms a Glycyl lysine isopeptide (Lys-Gly) (interchain with G-Cter in SUMO1); alternate linkage. Lysine 117 participates in a covalent cross-link: Glycyl lysine isopeptide (Lys-Gly) (interchain with G-Cter in SUMO2); alternate. The span at glutamine 118 to aspartate 130 shows a compositional bias: basic and acidic residues. Residue lysine 143 forms a Glycyl lysine isopeptide (Lys-Gly) (interchain with G-Cter in SUMO1); alternate linkage. Lysine 143 participates in a covalent cross-link: Glycyl lysine isopeptide (Lys-Gly) (interchain with G-Cter in SUMO2); alternate. The tract at residues methionine 146–aspartate 206 is disordered. Residues lysine 147 and lysine 163 each participate in a glycyl lysine isopeptide (Lys-Gly) (interchain with G-Cter in SUMO2) cross-link. Residues arginine 174 to glycine 193 show a composition bias toward basic and acidic residues. In terms of domain architecture, B30.2/SPRY spans arginine 192 to glutamate 389. A Phosphoserine modification is found at serine 195. Threonine 210 carries the phosphothreonine modification. The interval isoleucine 214–glutamine 859 is necessary for interaction with TP53. Residues lysine 271 and lysine 450 each participate in a glycyl lysine isopeptide (Lys-Gly) (interchain with G-Cter in SUMO2) cross-link. Residues asparagine 457–tyrosine 595 form a necessary for interaction with BRD7 and transcriptional activation region. Phosphoserine is present on serine 513. Lysine 540 participates in a covalent cross-link: Glycyl lysine isopeptide (Lys-Gly) (interchain with G-Cter in SUMO2). Residues tyrosine 595–serine 612 show a composition bias toward basic and acidic residues. Positions tyrosine 595–proline 814 are disordered. Repeat copies occupy residues arginine 613–glycine 615, arginine 620–glycine 622, arginine 639–glycine 641, arginine 645–glycine 647, and arginine 659–glycine 661. 2 stretches are compositionally biased toward gly residues: residues arginine 613 to phenylalanine 626 and proline 634 to tyrosine 670. The interval arginine 613–glycine 661 is 5 X 3 AA repeats of R-G-G. The tract at residues arginine 613–glycine 661 is necessary for transcription repression. Arginine 639 is modified (asymmetric dimethylarginine). An asymmetric dimethylarginine; alternate mark is found at arginine 645 and arginine 659. Residues arginine 645 and arginine 659 each carry the omega-N-methylarginine; alternate modification. Omega-N-methylarginine is present on residues arginine 664 and arginine 674. Over residues asparagine 671–glutamine 696 the composition is skewed to low complexity. The span at glutamine 697–tyrosine 720 shows a compositional bias: pro residues. Serine 721 carries the post-translational modification Phosphoserine. Polar residues predominate over residues glycine 728–asparagine 744. Over residues threonine 745–threonine 775 the composition is skewed to low complexity. Pro residues-rich tracts occupy residues alanine 776 to alanine 786 and asparagine 796 to threonine 807.

As to quaternary structure, interacts with BRD7, PRMT2, TP53 and NXF1. Associates with histones and BRD7. Methylated.

It is found in the nucleus. Its function is as follows. Acts as a basic transcriptional regulator. Represses basic transcription driven by several virus and cellular promoters. When associated with BRD7, activates transcription of glucocorticoid-responsive promoter in the absence of ligand-stimulation. Also plays a role in mRNA processing and transport. Binds avidly to poly(G) and poly(C) RNA homopolymers in vitro. This chain is Heterogeneous nuclear ribonucleoprotein U-like protein 1 (Hnrnpul1), found in Mus musculus (Mouse).